The chain runs to 336 residues: Large ribosomal subunit protein uL3 (336 aa).

Disordered regions lie at residues 1 to 43 (MPQP…QGFA), 205 to 230 (ITKG…HARQ), and 311 to 336 (RPAV…SNQG). Over residues 219–230 (GVQKRKGKHARQ) the composition is skewed to basic residues.

The protein belongs to the universal ribosomal protein uL3 family. As to quaternary structure, part of the 50S ribosomal subunit. Forms a cluster with proteins L14 and L24e.

One of the primary rRNA binding proteins, it binds directly near the 3'-end of the 23S rRNA, where it nucleates assembly of the 50S subunit. The protein is Large ribosomal subunit protein uL3 of Natronomonas pharaonis (strain ATCC 35678 / DSM 2160 / CIP 103997 / JCM 8858 / NBRC 14720 / NCIMB 2260 / Gabara) (Halobacterium pharaonis).